The chain runs to 423 residues: Nucleoporin NUP42 (423 aa).

The C3H1-type zinc-finger motif lies at 1-25; sequence MAICQFFLQGRCRFGDRCWNEHPGA. An FG 1 repeat occupies 14–15; the sequence is FG. Residues 24-85 are disordered; that stretch reads GARGAGGGRQ…EKPYFSSFDS (62 aa). Over residues 40-69 the composition is skewed to polar residues; that stretch reads SGNNRRGWNTTSQRYSNVIQPSSFSKSTPW. The segment at 94–170 is interaction with HIV-1 Vpr; sequence GFGLSENPFA…EYHNFLTSNN (77 aa). Residues 95-96 form an FG 2 repeat; it reads FG. Ser-106 carries the post-translational modification Phosphoserine. FG repeat units follow at residues 218–219, 220–221, 265–266, 271–272, 288–289, 290–291, 311–312, 336–337, 345–346, and 364–365; these read FG. The segment at 365–423 is interaction with GLE1; it reads GNSSISTSLSASSSIIATDNVLFTPRDKLTVEELEQFQSKKFTLGKIPLKPPPLELLNV.

In terms of assembly, probable component of the nuclear pore complex (NPC). Interacts with nuclear export protein NXF1. Interacts with GLE1. Able to form a heterotrimer with NUP155 and GLE1 in vitro. Interacts with XPO1. As to quaternary structure, (Microbial infection) Interacts with the HIV-1 virus proteins Rev and Vpr. The interaction with HIV-1 Rev, a protein that mediates nuclear export of unspliced viral RNAs, suggests that its function may be bypassed by the HIV-1 virus. O-glycosylated. Ubiquitously expressed.

The protein localises to the nucleus. It localises to the nuclear pore complex. Its subcellular location is the nucleus membrane. Functionally, required for the export of mRNAs containing poly(A) tails from the nucleus into the cytoplasm. Its function is as follows. (Microbial infection) In case of infection by HIV-1, it may participate in the docking of viral Vpr at the nuclear envelope. The sequence is that of Nucleoporin NUP42 from Homo sapiens (Human).